The sequence spans 217 residues: 3,4-dihydroxy-2-butanone 4-phosphate synthase (217 aa).

D-ribulose 5-phosphate contacts are provided by residues 37-38 (RE), D42, 150-154 (RRGHT), and E174. Position 38 (E38) interacts with Mg(2+). A Mg(2+)-binding site is contributed by H153.

Belongs to the DHBP synthase family. Homodimer. Requires Mg(2+) as cofactor. The cofactor is Mn(2+).

The enzyme catalyses D-ribulose 5-phosphate = (2S)-2-hydroxy-3-oxobutyl phosphate + formate + H(+). The protein operates within cofactor biosynthesis; riboflavin biosynthesis; 2-hydroxy-3-oxobutyl phosphate from D-ribulose 5-phosphate: step 1/1. Its function is as follows. Catalyzes the conversion of D-ribulose 5-phosphate to formate and 3,4-dihydroxy-2-butanone 4-phosphate. The sequence is that of 3,4-dihydroxy-2-butanone 4-phosphate synthase from Shewanella sediminis (strain HAW-EB3).